The chain runs to 1111 residues: Phytochrome C (1111 aa).

Residues 213-393 (NMLLLCDALV…VFGVQINKEA (181 aa)) form the GAF domain. C318 contacts phytochromobilin. PAS domains follow at residues 604–674 (IVNE…LEGS) and 737–808 (DYAR…TKLR). The 223-residue stretch at 889–1111 (YLRHEVKDPE…FVILTEFPLI (223 aa)) folds into the Histidine kinase domain.

Belongs to the phytochrome family. Homodimer. Post-translationally, contains one covalently linked phytochromobilin chromophore.

Functionally, regulatory photoreceptor which exists in two forms that are reversibly interconvertible by light: the Pr form that absorbs maximally in the red region of the spectrum and the Pfr form that absorbs maximally in the far-red region. Photoconversion of Pr to Pfr induces an array of morphogenic responses, whereas reconversion of Pfr to Pr cancels the induction of those responses. Pfr controls the expression of a number of nuclear genes including those encoding the small subunit of ribulose-bisphosphate carboxylase, chlorophyll A/B binding protein, protochlorophyllide reductase, rRNA, etc. It also controls the expression of its own gene(s) in a negative feedback fashion. The chain is Phytochrome C (PHYC) from Arabidopsis thaliana (Mouse-ear cress).